A 103-amino-acid chain; its full sequence is Large ribosomal subunit protein uL23 (103 aa).

This sequence belongs to the universal ribosomal protein uL23 family. As to quaternary structure, part of the 50S ribosomal subunit. Contacts protein L29, and trigger factor when it is bound to the ribosome.

Functionally, one of the early assembly proteins it binds 23S rRNA. One of the proteins that surrounds the polypeptide exit tunnel on the outside of the ribosome. Forms the main docking site for trigger factor binding to the ribosome. The chain is Large ribosomal subunit protein uL23 from Aquifex aeolicus (strain VF5).